A 313-amino-acid polypeptide reads, in one-letter code: tRNA dimethylallyltransferase (313 aa).

10 to 17 (GPTAVGKT) lines the ATP pocket. 12–17 (TAVGKT) lines the substrate pocket. Residues 35-38 (DSMQ) form an interaction with substrate tRNA region.

Belongs to the IPP transferase family. Monomer. Mg(2+) serves as cofactor.

The enzyme catalyses adenosine(37) in tRNA + dimethylallyl diphosphate = N(6)-dimethylallyladenosine(37) in tRNA + diphosphate. Its function is as follows. Catalyzes the transfer of a dimethylallyl group onto the adenine at position 37 in tRNAs that read codons beginning with uridine, leading to the formation of N6-(dimethylallyl)adenosine (i(6)A). This is tRNA dimethylallyltransferase from Alkaliphilus oremlandii (strain OhILAs) (Clostridium oremlandii (strain OhILAs)).